Reading from the N-terminus, the 367-residue chain is Peptide chain release factor 2 (367 aa).

Position 254 is an N5-methylglutamine (Gln-254).

Belongs to the prokaryotic/mitochondrial release factor family. Post-translationally, methylated by PrmC. Methylation increases the termination efficiency of RF2.

It localises to the cytoplasm. Peptide chain release factor 2 directs the termination of translation in response to the peptide chain termination codons UGA and UAA. The polypeptide is Peptide chain release factor 2 (Neisseria meningitidis serogroup A / serotype 4A (strain DSM 15465 / Z2491)).